Here is a 222-residue protein sequence, read N- to C-terminus: Thiol:disulfide interchange protein DsbL (222 aa).

An N-terminal signal peptide occupies residues 1-27; sequence MSKLGISSLFKTILLTAALAVSFTASA. Residues 28 to 221 form the Thioredoxin domain; it reads FTEGTDYMVL…MADLIRELAS (194 aa). A disulfide bond links cysteine 56 and cysteine 59.

This sequence belongs to the thioredoxin family. DsbL subfamily. In terms of assembly, interacts with DsbI.

The protein resides in the periplasm. Its function is as follows. Involved in disulfide-bond formation. Acts by transferring its disulfide bond to other proteins. Part of a redox system composed of DsbI and DsbL that mediates formation of an essential disulfide bond in AssT. This chain is Thiol:disulfide interchange protein DsbL, found in Escherichia coli O6:H1 (strain CFT073 / ATCC 700928 / UPEC).